The chain runs to 396 residues: tRNA-specific 2-thiouridylase MnmA (396 aa).

Residues 11 to 18 (GLSGGVDS) and Met-37 each bind ATP. Positions 97-99 (NPD) are interaction with target base in tRNA. Cys-102 (nucleophile) is an active-site residue. Cys-102 and Cys-225 form a disulfide bridge. Gly-126 provides a ligand contact to ATP. The interval 175–177 (KDQ) is interaction with tRNA. The Cysteine persulfide intermediate role is filled by Cys-225. Residues 343–344 (RY) are interaction with tRNA.

Belongs to the MnmA/TRMU family.

The protein resides in the cytoplasm. The catalysed reaction is S-sulfanyl-L-cysteinyl-[protein] + uridine(34) in tRNA + AH2 + ATP = 2-thiouridine(34) in tRNA + L-cysteinyl-[protein] + A + AMP + diphosphate + H(+). Its function is as follows. Catalyzes the 2-thiolation of uridine at the wobble position (U34) of tRNA, leading to the formation of s(2)U34. The protein is tRNA-specific 2-thiouridylase MnmA of Methylibium petroleiphilum (strain ATCC BAA-1232 / LMG 22953 / PM1).